We begin with the raw amino-acid sequence, 348 residues long: UDP-glucose 4-epimerase (348 aa).

NAD(+) contacts are provided by residues 12–14 (GYI), 33–37 (DNFHN), 66–67 (DI), Phe-88, and Lys-92. 132-134 (SAT) lines the substrate pocket. The Proton acceptor role is filled by Tyr-157. Residues Lys-161 and Tyr-185 each contribute to the NAD(+) site. Substrate-binding positions include 185-187 (YFN), 206-208 (NNL), 224-226 (NVF), Arg-239, and 300-303 (REGD).

The protein belongs to the NAD(P)-dependent epimerase/dehydratase family. In terms of assembly, homodimer. The cofactor is NAD(+).

It catalyses the reaction UDP-alpha-D-glucose = UDP-alpha-D-galactose. The catalysed reaction is UDP-N-acetyl-alpha-D-glucosamine = UDP-N-acetyl-alpha-D-galactosamine. Its pathway is carbohydrate metabolism; galactose metabolism. Catalyzes two distinct but analogous reactions: the reversible epimerization of UDP-glucose to UDP-galactose and the reversible epimerization of UDP-N-acetylglucosamine to UDP-N-acetylgalactosamine. The reaction with UDP-Gal plays a critical role in the Leloir pathway of galactose catabolism in which galactose is converted to the glycolytic intermediate glucose 6-phosphate. It contributes to the catabolism of dietary galactose and enables the endogenous biosynthesis of both UDP-Gal and UDP-GalNAc when exogenous sources are limited. Both UDP-sugar interconversions are important in the synthesis of glycoproteins and glycolipids. In Bos taurus (Bovine), this protein is UDP-glucose 4-epimerase.